Reading from the N-terminus, the 584-residue chain is Arginine--tRNA ligase (584 aa).

Residues 127-137 (PNTNKPLHIGH) carry the 'HIGH' region motif.

Belongs to the class-I aminoacyl-tRNA synthetase family. Monomer.

It localises to the cytoplasm. The catalysed reaction is tRNA(Arg) + L-arginine + ATP = L-arginyl-tRNA(Arg) + AMP + diphosphate. The chain is Arginine--tRNA ligase from Borrelia hermsii (strain HS1 / DAH).